Consider the following 558-residue polypeptide: 2-isopropylmalate synthase (558 aa).

In terms of domain architecture, Pyruvate carboxyltransferase spans 30 to 303 (PIWCSVDLRD…DPELDCRDIE (274 aa)). Mg(2+) is bound by residues D39, H242, H244, and N278. The tract at residues 437–558 (QPNARIKFVD…ANRVLEERAK (122 aa)) is regulatory domain.

This sequence belongs to the alpha-IPM synthase/homocitrate synthase family. LeuA type 2 subfamily. Homodimer. Mg(2+) serves as cofactor.

The protein resides in the cytoplasm. It catalyses the reaction 3-methyl-2-oxobutanoate + acetyl-CoA + H2O = (2S)-2-isopropylmalate + CoA + H(+). It functions in the pathway amino-acid biosynthesis; L-leucine biosynthesis; L-leucine from 3-methyl-2-oxobutanoate: step 1/4. Its function is as follows. Catalyzes the condensation of the acetyl group of acetyl-CoA with 3-methyl-2-oxobutanoate (2-ketoisovalerate) to form 3-carboxy-3-hydroxy-4-methylpentanoate (2-isopropylmalate). This Agrobacterium fabrum (strain C58 / ATCC 33970) (Agrobacterium tumefaciens (strain C58)) protein is 2-isopropylmalate synthase.